The following is a 658-amino-acid chain: Threonine--tRNA ligase (658 aa).

The TGS domain maps to 1-63 (MDQITITFPD…DDNASIDFVA (63 aa)). Residues 245–548 (DHRKLGRELD…LIEHYAGNFP (304 aa)) form a catalytic region. C341, H392, and H525 together coordinate Zn(2+).

Belongs to the class-II aminoacyl-tRNA synthetase family. Homodimer. It depends on Zn(2+) as a cofactor.

It localises to the cytoplasm. The catalysed reaction is tRNA(Thr) + L-threonine + ATP = L-threonyl-tRNA(Thr) + AMP + diphosphate + H(+). Catalyzes the attachment of threonine to tRNA(Thr) in a two-step reaction: L-threonine is first activated by ATP to form Thr-AMP and then transferred to the acceptor end of tRNA(Thr). Also edits incorrectly charged L-seryl-tRNA(Thr). This Rhodopseudomonas palustris (strain ATCC BAA-98 / CGA009) protein is Threonine--tRNA ligase.